The chain runs to 295 residues: Protoheme IX farnesyltransferase 2 (295 aa).

The next 9 membrane-spanning stretches (helical) occupy residues 9–29, 36–56, 80–100, 108–128, 135–155, 163–183, 209–229, 230–250, and 265–285; these read ITKP…FFLA, LAVF…GCVF, LISL…GVAL, LAAL…SLYL, GTLV…VAVT, LTLL…IAIF, ILIY…SGYA, GMSY…MAWT, and FVFS…DFKV.

It belongs to the UbiA prenyltransferase family. Protoheme IX farnesyltransferase subfamily.

The protein localises to the cell inner membrane. It carries out the reaction heme b + (2E,6E)-farnesyl diphosphate + H2O = Fe(II)-heme o + diphosphate. Its pathway is porphyrin-containing compound metabolism; heme O biosynthesis; heme O from protoheme: step 1/1. Functionally, converts heme B (protoheme IX) to heme O by substitution of the vinyl group on carbon 2 of heme B porphyrin ring with a hydroxyethyl farnesyl side group. This chain is Protoheme IX farnesyltransferase 2, found in Pseudomonas fluorescens (strain Pf0-1).